The sequence spans 1181 residues: Integrin alpha-2 (1181 aa).

A signal peptide spans 1 to 29; the sequence is MGPERTGAAPLPLLLVLALSQGILNCCLA. Topologically, residues 30-1132 are extracellular; that stretch reads YNVGLPEAKI…KPDEKAEVPT (1103 aa). FG-GAP repeat units follow at residues 34–92 and 101–161; these read LPEA…TATC and TSIP…LSAS. Cys-83 and Cys-92 form a disulfide bridge. 3 N-linked (GlcNAc...) asparagine glycosylation sites follow: Asn-105, Asn-112, and Asn-343. Residues 188-365 enclose the VWFA domain; sequence WDAVKNFLEK…TLGEQIFSIE (178 aa). 5 FG-GAP repeats span residues 366–420, 423–475, 477–539, 540–598, and 602–664; these read GTVQ…LIFP, AFDQ…ENGN, TVIQ…ILGQ, HQFL…TIRT, and QKIL…FTPE. Asn-432, Asn-460, and Asn-475 each carry an N-linked (GlcNAc...) asparagine glycan. Residues Asp-499, Asp-501, Asp-503, Asp-507, Asp-563, Asn-565, Asp-567, Asp-571, Asp-627, Asn-629, Asp-631, and Asp-635 each coordinate Ca(2+). 5 cysteine pairs are disulfide-bonded: Cys-680–Cys-737, Cys-789–Cys-795, Cys-865–Cys-876, Cys-1019–Cys-1050, and Cys-1055–Cys-1060. A glycan (N-linked (GlcNAc...) asparagine) is linked at Asn-699. N-linked (GlcNAc...) asparagine glycosylation is found at Asn-1057, Asn-1074, and Asn-1081. A helical transmembrane segment spans residues 1133-1154; sequence GVIIGSIIAGILLLLALVAILW. Positions 1155–1161 are interaction with HPS5; it reads KLGFFKR. At 1155–1181 the chain is on the cytoplasmic side; it reads KLGFFKRKYEKMTKNPDEIDETTELSS. Residues 1157-1161 carry the GFFKR motif motif; the sequence is GFFKR.

Belongs to the integrin alpha chain family. As to quaternary structure, heterodimer of an alpha and a beta subunit. Alpha-2 associates with beta-1. Interacts with HPS5 and RAB21. In terms of assembly, (Microbial infection) Integrin ITGA2:ITGB1 interacts (via ITAG2 I-domain) with rotavirus A VP4 protein. (Microbial infection) Integrin ITGA2:ITGB1 interacts with human echoviruses 1 and 8 capsid proteins.

Its subcellular location is the membrane. In terms of biological role, integrin alpha-2/beta-1 is a receptor for laminin, collagen, collagen C-propeptides, fibronectin and E-cadherin. It recognizes the proline-hydroxylated sequence G-F-P-G-E-R in collagen. It is responsible for adhesion of platelets and other cells to collagens, modulation of collagen and collagenase gene expression, force generation and organization of newly synthesized extracellular matrix. Its function is as follows. (Microbial infection) Integrin ITGA2:ITGB1 acts as a receptor for Human rotavirus A. Functionally, (Microbial infection) Integrin ITGA2:ITGB1 acts as a receptor for Human echoviruses 1 and 8. The protein is Integrin alpha-2 (ITGA2) of Homo sapiens (Human).